Reading from the N-terminus, the 260-residue chain is Indole-3-glycerol phosphate synthase (260 aa).

It belongs to the TrpC family.

It catalyses the reaction 1-(2-carboxyphenylamino)-1-deoxy-D-ribulose 5-phosphate + H(+) = (1S,2R)-1-C-(indol-3-yl)glycerol 3-phosphate + CO2 + H2O. Its pathway is amino-acid biosynthesis; L-tryptophan biosynthesis; L-tryptophan from chorismate: step 4/5. The sequence is that of Indole-3-glycerol phosphate synthase from Neisseria gonorrhoeae (strain ATCC 700825 / FA 1090).